The following is a 501-amino-acid chain: NAD(P)H-quinone oxidoreductase subunit 2, chloroplastic (501 aa).

14 helical membrane-spanning segments follow: residues 15–35 (ILPE…DLTF), 40–60 (TIWL…ILLF), 82–102 (IFQS…IEYI), 107–127 (MAIP…MFLC), 132–152 (LVTI…LCGY), 167–187 (LLIG…LYGL), 212–232 (TFIA…LVPF), 244–264 (PTPV…ALAT), 278–298 (WKIF…LVAI), 307–327 (LAYS…TGDL), 333–353 (MTIY…CIIL), 378–398 (FSLT…GFFG), 410–430 (GFYL…YYYL), and 466–486 (FVMI…NPIF).

It belongs to the complex I subunit 2 family. NDH is composed of at least 16 different subunits, 5 of which are encoded in the nucleus.

The protein localises to the plastid. It is found in the chloroplast thylakoid membrane. It catalyses the reaction a plastoquinone + NADH + (n+1) H(+)(in) = a plastoquinol + NAD(+) + n H(+)(out). The enzyme catalyses a plastoquinone + NADPH + (n+1) H(+)(in) = a plastoquinol + NADP(+) + n H(+)(out). Functionally, NDH shuttles electrons from NAD(P)H:plastoquinone, via FMN and iron-sulfur (Fe-S) centers, to quinones in the photosynthetic chain and possibly in a chloroplast respiratory chain. The immediate electron acceptor for the enzyme in this species is believed to be plastoquinone. Couples the redox reaction to proton translocation, and thus conserves the redox energy in a proton gradient. This is NAD(P)H-quinone oxidoreductase subunit 2, chloroplastic from Marchantia polymorpha (Common liverwort).